A 679-amino-acid polypeptide reads, in one-letter code: DNA-directed RNA polymerase subunit beta' (679 aa).

Residues cysteine 69, cysteine 71, cysteine 87, and cysteine 90 each contribute to the Zn(2+) site. Residues aspartate 489, aspartate 491, and aspartate 493 each coordinate Mg(2+).

Belongs to the RNA polymerase beta' chain family. RpoC1 subfamily. As to quaternary structure, in plastids the minimal PEP RNA polymerase catalytic core is composed of four subunits: alpha, beta, beta', and beta''. When a (nuclear-encoded) sigma factor is associated with the core the holoenzyme is formed, which can initiate transcription. The cofactor is Mg(2+). It depends on Zn(2+) as a cofactor.

It is found in the plastid. Its subcellular location is the chloroplast. The catalysed reaction is RNA(n) + a ribonucleoside 5'-triphosphate = RNA(n+1) + diphosphate. Its function is as follows. DNA-dependent RNA polymerase catalyzes the transcription of DNA into RNA using the four ribonucleoside triphosphates as substrates. This is DNA-directed RNA polymerase subunit beta' from Phalaenopsis aphrodite subsp. formosana (Moth orchid).